The sequence spans 77 residues: Structural DNA-binding protein p10 (77 aa).

Residues 1–12 show a composition bias toward polar residues; the sequence is MPTKAGTKSTAN. A disordered region spans residues 1–38; that stretch reads MPTKAGTKSTANKKTTKGPSKSGSAKGHTGKTHATALH. Low complexity predominate over residues 17 to 27; that stretch reads KGPSKSGSAKG.

Belongs to the asfivirus P10 family.

It localises to the virion. In terms of biological role, may play a role in genome packaging through direct interaction with viral DNA. Binds to ssDNA and dsDNA with the same apparent affinity in vitro. The polypeptide is Structural DNA-binding protein p10 (Ornithodoros (relapsing fever ticks)).